We begin with the raw amino-acid sequence, 365 residues long: tRNA N6-adenosine threonylcarbamoyltransferase (365 aa).

Positions 119 and 123 each coordinate Fe cation. Substrate is bound by residues 141-145, D174, and G187; that span reads LVSGG. The interval 184–203 is disordered; it reads QPGGPSVEGEARQGDPKRFR. Basic and acidic residues predominate over residues 192–201; it reads GEARQGDPKR. N289 contacts substrate. Position 317 (D317) interacts with Fe cation. The segment at 342–365 is disordered; it reads ARPRWPLDQSSPAMLGSGKKGAKA.

Belongs to the KAE1 / TsaD family. It depends on Fe(2+) as a cofactor.

It localises to the cytoplasm. The enzyme catalyses L-threonylcarbamoyladenylate + adenosine(37) in tRNA = N(6)-L-threonylcarbamoyladenosine(37) in tRNA + AMP + H(+). Its function is as follows. Required for the formation of a threonylcarbamoyl group on adenosine at position 37 (t(6)A37) in tRNAs that read codons beginning with adenine. Is involved in the transfer of the threonylcarbamoyl moiety of threonylcarbamoyl-AMP (TC-AMP) to the N6 group of A37, together with TsaE and TsaB. TsaD likely plays a direct catalytic role in this reaction. In Ruegeria pomeroyi (strain ATCC 700808 / DSM 15171 / DSS-3) (Silicibacter pomeroyi), this protein is tRNA N6-adenosine threonylcarbamoyltransferase.